Reading from the N-terminus, the 183-residue chain is MKFSLFFSVFFLAVLHACLSESEIDLEDEEHFMSSDSFLSEIQDESRGKTCIERNKECTNDRHGCCRGKIFKDKCTCVKNGKTEKCVCTQKKWAKIIESYIGDIPALPKPVDDKCVPKHADCSKRKDDCCKGGIFKYQCKCYDMYDDDGEKTDLCGCVSPVEHQAIEGALRIAKKLIGDRWGR.

The signal sequence occupies residues Met-1–Ser-20. Residues Glu-21–Arg-47 constitute a propeptide that is removed on maturation. Positions Asp-44–Arg-47 match the Processing quadruplet motif motif. 8 cysteine pairs are disulfide-bonded: Cys-51–Cys-66, Cys-58–Cys-75, Cys-65–Cys-88, Cys-77–Cys-86, Cys-115–Cys-130, Cys-122–Cys-139, Cys-129–Cys-157, and Cys-141–Cys-155. 2 Domain repeats span residues Cys-51–Cys-77 and Cys-115–Cys-141. Positions Cys-51 to Cys-141 are 2 X approximate repeats with cysteine pattern C-C-CC-C-C. Residues Gln-164–Ile-177 form a predicted alpha-helix region. The residue at position 181 (Trp-181) is a Tryptophan amide.

The protein belongs to the neurotoxin 19 (CSTX) family. Double-CSTX subfamily. Post-translationally, cleavage of the propeptide depends on the processing quadruplet motif (XXXR, with at least one of X being E). Expressed by the venom gland.

Its subcellular location is the secreted. The protein localises to the target cell membrane. Functionally, spider venom toxin that exhibits cytolytic activity by forming an alpha-helix across the membrane. Lethal to insect larvae. Causes instant paralysis and death in the larvae of the flesh fly (S.carnaria) at doses of 20 ug/g, at doses of less than 10 ug/g causes reversible paralysis. Has cytolytic activity against insect Sf9 cells. Causes stable and irreversible depolarization of fly muscle fibers, leading to contracture at higher toxin concentrations. Destabilizes membranes. In Cheiracanthium punctorium (Yellow sac spider), this protein is DELTA-miturgitoxin-Cp1a.